Consider the following 204-residue polypeptide: Uracil-DNA glycosylase (204 aa).

D47 acts as the Proton acceptor in catalysis.

It belongs to the uracil-DNA glycosylase (UDG) superfamily. UNG family.

The protein resides in the host nucleus. The catalysed reaction is Hydrolyzes single-stranded DNA or mismatched double-stranded DNA and polynucleotides, releasing free uracil.. Functionally, excises uracil residues from the DNA which can arise as a result of misincorporation of dUMP residues by DNA polymerase or deamination of cytosines. Therefore may reduce deleterious uracil incorporation into the viral genome, particularly in terminally differentiated cells which lack DNA repair enzymes. This Bos taurus (Bovine) protein is Uracil-DNA glycosylase (UL2).